Consider the following 93-residue polypeptide: Large ribosomal subunit protein uL23 (93 aa).

It belongs to the universal ribosomal protein uL23 family. As to quaternary structure, part of the 50S ribosomal subunit. Contacts protein L29, and trigger factor when it is bound to the ribosome.

Functionally, one of the early assembly proteins it binds 23S rRNA. One of the proteins that surrounds the polypeptide exit tunnel on the outside of the ribosome. Forms the main docking site for trigger factor binding to the ribosome. This chain is Large ribosomal subunit protein uL23, found in Campylobacter jejuni subsp. jejuni serotype O:6 (strain 81116 / NCTC 11828).